We begin with the raw amino-acid sequence, 333 residues long: Photosystem II assembly lipoprotein Ycf48 (333 aa).

Positions 1–23 are cleaved as a signal peptide; it reads MNRLLSSAVNLLLVLVLGVGLSG. Residue cysteine 24 is the site of N-palmitoyl cysteine attachment. Cysteine 24 carries the S-diacylglycerol cysteine lipid modification.

This sequence belongs to the Ycf48 family. As to quaternary structure, part of early PSII assembly complexes which includes D1 (psbA) and PsbI; not found in mature PSII. Binds to the lumenal side of PSII complexes. Interacts with YidC.

Its subcellular location is the cellular thylakoid membrane. Its function is as follows. A factor required for optimal assembly of photosystem II (PSII), acting in the early stages of PSII assembly. Also plays a role in replacement of photodamaged D1 (psbA). Assists YidC in synthesis of chlorophyll-binding proteins. This Synechococcus sp. (strain CC9902) protein is Photosystem II assembly lipoprotein Ycf48.